Here is a 244-residue protein sequence, read N- to C-terminus: Mono-ADP-ribosyltransferase C3 (244 aa).

The N-terminal stretch at M1–G40 is a signal peptide. A TR mART core domain is found at D44–K244. NAD(+) is bound by residues T80, N87, R91, R128–D131, and R167–E169. The active site involves R128. S174 is a catalytic residue. Residues F182–R185 and Q211–E213 contribute to the NAD(+) site. Residue E213 is part of the active site.

To exoenzymes 3 of C.limosum and C.botulinum D phage, and to S.aureus ediN. Monomer.

It localises to the secreted. It carries out the reaction L-asparaginyl-[protein] + NAD(+) = N(4)-(ADP-D-ribosyl)-L-asparaginyl-[protein] + nicotinamide + H(+). Its function is as follows. ADP-ribosylates eukaryotic Rho and Rac proteins on an asparagine residue. The polypeptide is Mono-ADP-ribosyltransferase C3 (Clostridium botulinum C phage (Clostridium botulinum C bacteriophage)).